Reading from the N-terminus, the 425-residue chain is Serine--tRNA ligase (425 aa).

L-serine is bound at residue 232–234 (TSE). ATP contacts are provided by residues 263 to 265 (RRE) and valine 279. Glutamate 286 lines the L-serine pocket. ATP is bound at residue 350-353 (EVVS). Threonine 387 serves as a coordination point for L-serine.

It belongs to the class-II aminoacyl-tRNA synthetase family. Type-1 seryl-tRNA synthetase subfamily. As to quaternary structure, homodimer. The tRNA molecule binds across the dimer.

Its subcellular location is the cytoplasm. It catalyses the reaction tRNA(Ser) + L-serine + ATP = L-seryl-tRNA(Ser) + AMP + diphosphate + H(+). It carries out the reaction tRNA(Sec) + L-serine + ATP = L-seryl-tRNA(Sec) + AMP + diphosphate + H(+). It participates in aminoacyl-tRNA biosynthesis; selenocysteinyl-tRNA(Sec) biosynthesis; L-seryl-tRNA(Sec) from L-serine and tRNA(Sec): step 1/1. Catalyzes the attachment of serine to tRNA(Ser). Is also able to aminoacylate tRNA(Sec) with serine, to form the misacylated tRNA L-seryl-tRNA(Sec), which will be further converted into selenocysteinyl-tRNA(Sec). The polypeptide is Serine--tRNA ligase (Methanospirillum hungatei JF-1 (strain ATCC 27890 / DSM 864 / NBRC 100397 / JF-1)).